The primary structure comprises 242 residues: Glucosamine-6-phosphate deaminase (242 aa).

The active-site Proton acceptor; for enolization step is aspartate 67. Residue asparagine 136 is the For ring-opening step of the active site. Histidine 138 acts as the Proton acceptor; for ring-opening step in catalysis. Catalysis depends on glutamate 143, which acts as the For ring-opening step.

It belongs to the glucosamine/galactosamine-6-phosphate isomerase family. NagB subfamily.

It catalyses the reaction alpha-D-glucosamine 6-phosphate + H2O = beta-D-fructose 6-phosphate + NH4(+). It participates in amino-sugar metabolism; N-acetylneuraminate degradation; D-fructose 6-phosphate from N-acetylneuraminate: step 5/5. Functionally, catalyzes the reversible isomerization-deamination of glucosamine 6-phosphate (GlcN6P) to form fructose 6-phosphate (Fru6P) and ammonium ion. The protein is Glucosamine-6-phosphate deaminase of Alkaliphilus metalliredigens (strain QYMF).